The following is a 353-amino-acid chain: Photosystem II D2 protein (353 aa).

Thr-2 carries the post-translational modification N-acetylthreonine. Thr-2 carries the post-translational modification Phosphothreonine. The chain crosses the membrane as a helical span at residues 41–61 (CAYFALGGWFTGTTFVTSWYT). His-118 is a binding site for chlorophyll a. Residues 125-141 (GFMLRQFELARSVQLRP) form a helical membrane-spanning segment. The pheophytin a site is built by Gln-130 and Asn-143. The chain crosses the membrane as a helical span at residues 153 to 166 (VFVSVFLIYPLGQS). His-198 provides a ligand contact to chlorophyll a. The chain crosses the membrane as a helical span at residues 208–228 (AALLCAIHGATVENTLFEDGD). The a plastoquinone site is built by His-215 and Phe-262. His-215 provides a ligand contact to Fe cation. His-269 provides a ligand contact to Fe cation. The chain crosses the membrane as a helical span at residues 279–295 (GLWMSAIGVVGLALNLR).

The protein belongs to the reaction center PufL/M/PsbA/D family. PSII is composed of 1 copy each of membrane proteins PsbA, PsbB, PsbC, PsbD, PsbE, PsbF, PsbH, PsbI, PsbJ, PsbK, PsbL, PsbM, PsbT, PsbX, PsbY, PsbZ, Psb30/Ycf12, at least 3 peripheral proteins of the oxygen-evolving complex and a large number of cofactors. It forms dimeric complexes. The D1/D2 heterodimer binds P680, chlorophylls that are the primary electron donor of PSII, and subsequent electron acceptors. It shares a non-heme iron and each subunit binds pheophytin, quinone, additional chlorophylls, carotenoids and lipids. There is also a Cl(-1) ion associated with D1 and D2, which is required for oxygen evolution. The PSII complex binds additional chlorophylls, carotenoids and specific lipids. serves as cofactor.

Its subcellular location is the plastid. The protein localises to the chloroplast thylakoid membrane. It catalyses the reaction 2 a plastoquinone + 4 hnu + 2 H2O = 2 a plastoquinol + O2. In terms of biological role, photosystem II (PSII) is a light-driven water:plastoquinone oxidoreductase that uses light energy to abstract electrons from H(2)O, generating O(2) and a proton gradient subsequently used for ATP formation. It consists of a core antenna complex that captures photons, and an electron transfer chain that converts photonic excitation into a charge separation. The D1/D2 (PsbA/PsbD) reaction center heterodimer binds P680, the primary electron donor of PSII as well as several subsequent electron acceptors. D2 is needed for assembly of a stable PSII complex. This chain is Photosystem II D2 protein, found in Lolium perenne (Perennial ryegrass).